Here is a 353-residue protein sequence, read N- to C-terminus: S-adenosylmethionine:tRNA ribosyltransferase-isomerase (353 aa).

Belongs to the QueA family. As to quaternary structure, monomer.

The protein resides in the cytoplasm. The catalysed reaction is 7-aminomethyl-7-carbaguanosine(34) in tRNA + S-adenosyl-L-methionine = epoxyqueuosine(34) in tRNA + adenine + L-methionine + 2 H(+). It functions in the pathway tRNA modification; tRNA-queuosine biosynthesis. In terms of biological role, transfers and isomerizes the ribose moiety from AdoMet to the 7-aminomethyl group of 7-deazaguanine (preQ1-tRNA) to give epoxyqueuosine (oQ-tRNA). In Cupriavidus metallidurans (strain ATCC 43123 / DSM 2839 / NBRC 102507 / CH34) (Ralstonia metallidurans), this protein is S-adenosylmethionine:tRNA ribosyltransferase-isomerase.